A 677-amino-acid polypeptide reads, in one-letter code: Methionine--tRNA ligase (677 aa).

The 'HIGH' region signature appears at 15–25; that stretch reads PYANGSIHLGH. Cys146, Cys149, Cys159, and Cys162 together coordinate Zn(2+). Residues 333–337 carry the 'KMSKS' region motif; sequence KMSKS. Residue Lys336 participates in ATP binding. Positions 575 to 677 constitute a tRNA-binding domain; it reads DFAKVDLRVA…AGAKPGHQVK (103 aa).

This sequence belongs to the class-I aminoacyl-tRNA synthetase family. MetG type 1 subfamily. Homodimer. Zn(2+) serves as cofactor.

The protein resides in the cytoplasm. The enzyme catalyses tRNA(Met) + L-methionine + ATP = L-methionyl-tRNA(Met) + AMP + diphosphate. In terms of biological role, is required not only for elongation of protein synthesis but also for the initiation of all mRNA translation through initiator tRNA(fMet) aminoacylation. The protein is Methionine--tRNA ligase of Escherichia coli O6:K15:H31 (strain 536 / UPEC).